The following is a 71-amino-acid chain: Conotoxin ba5b (71 aa).

Residues Met1–Ala19 form the signal peptide. Residues Leu20 to Arg52 constitute a propeptide that is removed on maturation. Disulfide bonds link Cys54-Cys63 and Cys55-Cys64. Residue Cys64 is modified to Cysteine amide. Residues Arg66–Ser71 constitute a propeptide that is removed on maturation.

The protein belongs to the conotoxin T superfamily. As to expression, expressed by the venom duct.

Its subcellular location is the secreted. This chain is Conotoxin ba5b, found in Conus bayani (Bayan's cone).